The primary structure comprises 261 residues: tRNA pseudouridine synthase A (261 aa).

Asp-51 (nucleophile) is an active-site residue. Tyr-109 is a substrate binding site.

Belongs to the tRNA pseudouridine synthase TruA family. In terms of assembly, homodimer.

The catalysed reaction is uridine(38/39/40) in tRNA = pseudouridine(38/39/40) in tRNA. Formation of pseudouridine at positions 38, 39 and 40 in the anticodon stem and loop of transfer RNAs. The chain is tRNA pseudouridine synthase A from Photobacterium profundum (strain SS9).